Reading from the N-terminus, the 127-residue chain is UPF0102 protein ERGA_CDS_00540 (127 aa).

Belongs to the UPF0102 family.

The protein is UPF0102 protein ERGA_CDS_00540 of Ehrlichia ruminantium (strain Gardel).